Reading from the N-terminus, the 255-residue chain is Imidazole glycerol phosphate synthase subunit HisF (255 aa).

Catalysis depends on residues D11 and D130.

Belongs to the HisA/HisF family. In terms of assembly, heterodimer of HisH and HisF.

The protein resides in the cytoplasm. It catalyses the reaction 5-[(5-phospho-1-deoxy-D-ribulos-1-ylimino)methylamino]-1-(5-phospho-beta-D-ribosyl)imidazole-4-carboxamide + L-glutamine = D-erythro-1-(imidazol-4-yl)glycerol 3-phosphate + 5-amino-1-(5-phospho-beta-D-ribosyl)imidazole-4-carboxamide + L-glutamate + H(+). The protein operates within amino-acid biosynthesis; L-histidine biosynthesis; L-histidine from 5-phospho-alpha-D-ribose 1-diphosphate: step 5/9. IGPS catalyzes the conversion of PRFAR and glutamine to IGP, AICAR and glutamate. The HisF subunit catalyzes the cyclization activity that produces IGP and AICAR from PRFAR using the ammonia provided by the HisH subunit. The sequence is that of Imidazole glycerol phosphate synthase subunit HisF from Synechococcus sp. (strain ATCC 27144 / PCC 6301 / SAUG 1402/1) (Anacystis nidulans).